Here is a 1166-residue protein sequence, read N- to C-terminus: ATP-dependent helicase/deoxyribonuclease subunit B (1166 aa).

The 290-residue stretch at 1–290 (MGMRFILGRS…DTLEGNFQNR (290 aa)) folds into the UvrD-like helicase ATP-binding domain. 8–15 (GRSGTNKS) is a binding site for ATP. The UvrD-like helicase C-terminal domain occupies 283-588 (LEGNFQNRPY…QFSHVPPSMD (306 aa)). The [4Fe-4S] cluster site is built by C802, C1123, C1126, and C1132.

The protein belongs to the helicase family. AddB/RexB type 1 subfamily. As to quaternary structure, heterodimer of AddA and AddB. Mg(2+) is required as a cofactor. Requires [4Fe-4S] cluster as cofactor.

Functionally, the heterodimer acts as both an ATP-dependent DNA helicase and an ATP-dependent, dual-direction single-stranded exonuclease. Recognizes the chi site generating a DNA molecule suitable for the initiation of homologous recombination. The AddB subunit has 5' -&gt; 3' nuclease activity but not helicase activity. In Oceanobacillus iheyensis (strain DSM 14371 / CIP 107618 / JCM 11309 / KCTC 3954 / HTE831), this protein is ATP-dependent helicase/deoxyribonuclease subunit B.